A 133-amino-acid polypeptide reads, in one-letter code: Large-conductance mechanosensitive channel (133 aa).

Transmembrane regions (helical) follow at residues 8-28 (FAMK…GAFG), 30-50 (IVTS…LGGI), and 73-93 (GQFI…FLFI).

Belongs to the MscL family. In terms of assembly, homopentamer.

The protein resides in the cell membrane. Functionally, channel that opens in response to stretch forces in the membrane lipid bilayer. May participate in the regulation of osmotic pressure changes within the cell. The sequence is that of Large-conductance mechanosensitive channel from Hathewaya histolytica (Clostridium histolyticum).